The chain runs to 271 residues: Ribosomal RNA small subunit methyltransferase A (271 aa).

6 residues coordinate S-adenosyl-L-methionine: His18, Leu20, Gly45, Glu66, Asp91, and Asn113.

Belongs to the class I-like SAM-binding methyltransferase superfamily. rRNA adenine N(6)-methyltransferase family. RsmA subfamily.

The protein resides in the cytoplasm. The catalysed reaction is adenosine(1518)/adenosine(1519) in 16S rRNA + 4 S-adenosyl-L-methionine = N(6)-dimethyladenosine(1518)/N(6)-dimethyladenosine(1519) in 16S rRNA + 4 S-adenosyl-L-homocysteine + 4 H(+). Its function is as follows. Specifically dimethylates two adjacent adenosines (A1518 and A1519) in the loop of a conserved hairpin near the 3'-end of 16S rRNA in the 30S particle. May play a critical role in biogenesis of 30S subunits. The polypeptide is Ribosomal RNA small subunit methyltransferase A (Baumannia cicadellinicola subsp. Homalodisca coagulata).